Reading from the N-terminus, the 670-residue chain is G-protein coupled receptor moody (670 aa).

Residues 1 to 40 (MSDETTISLEDGYPPLEALTTMVPPADATGFSQSLLTFAA) are Extracellular-facing. A helical transmembrane segment spans residues 41–61 (VMTFLIMIVGICGNLLTVVAL). Residues 62-69 (LKCPKVRN) are Cytoplasmic-facing. Residues 70–90 (VAAAFIISLCIADLLFCALVL) traverse the membrane as a helical segment. Over 91 to 111 (PFQGLRFVQGTWRHGQVLCRL) the chain is Extracellular. Cysteine 109 and cysteine 188 are disulfide-bonded. Residues 112 to 132 (IPFIQYGNIGVSLLCIAMITI) form a helical membrane-spanning segment. Residues 133–152 (NRYVMITHHGLYARIYKRHW) are Cytoplasmic-facing. Residues 153 to 173 (IAVMIAACWLFSYGMQLPTLL) traverse the membrane as a helical segment. Topologically, residues 174–202 (GEWGRFGYDSRLQTCSIMTDDHGHSSKTT) are extracellular. A helical membrane pass occupies residues 203 to 223 (LFITAFVIPCLVIIACYAKIF). At 224–313 (WVVHKSEQRL…AKRNEWRITK (90 aa)) the chain is on the cytoplasmic side. A disordered region spans residues 258–302 (LPSGAECQPSNRVSSDSSSSFSIDVPETAPSGKQQPTRVKDQREV). Residues 267-279 (SNRVSSDSSSSFS) are compositionally biased toward low complexity. Residues 314–334 (MVLAIFLSFVVCYLPITIVKV) traverse the membrane as a helical segment. The Extracellular segment spans residues 335–345 (ADKNVEHPSLH). A helical transmembrane segment spans residues 346–366 (ICSYILLYLSACINPIIYVIM). Over 367–670 (NKQYRKAYKT…LTAKMKFPKD (304 aa)) the chain is Cytoplasmic. Disordered regions lie at residues 461 to 490 (DLIS…GSNS), 562 to 622 (ELPP…YMNV), and 636 to 670 (TNAV…FPKD). Over residues 564 to 584 (PPTPPATSAPTTPAPPPPSSP) the composition is skewed to pro residues. Low complexity predominate over residues 585–598 (LHPLSTDSSTTTIS). The segment covering 646–660 (GPANTSATVSISGSK) has biased composition (polar residues).

Belongs to the G-protein coupled receptor 1 family. Isoform A and isoform B are expressed in the head. Isoform B only is expressed in the body. Expressed in embryonic glial cells that are involved in ensheathment and insulation of the nervous system. Both isoforms are expressed in glia that insulate the larval and adult nervous system. Also expressed in the germ cells, the gut, and the heart.

It localises to the cell membrane. Functionally, isoform A and isoform B are required in glia to regulate the acute sensitivity to cocaine and to continuously maintain the proper blood-brain barrier (BBB) function. A moody-mediated signaling pathway functions in glia to regulate nervous system insulation and drug-related behaviors. Galphai and Galphao, and the regulator of G protein signaling, loco, are required in the surface glia to achieve effective insulation. The components function by regulating the cortical actin and thereby stabilizing the extended morphology of the surface glia, which in turn is necessary for the formation of septate junctions of sufficient length to achieve proper sealing of the nerve cord. The protein is G-protein coupled receptor moody of Drosophila melanogaster (Fruit fly).